The chain runs to 72 residues: Translation initiation factor IF-1 (72 aa).

Positions 1-72 (MAKEDSIEMQ…TKGRIVFRAR (72 aa)) constitute an S1-like domain.

It belongs to the IF-1 family. As to quaternary structure, component of the 30S ribosomal translation pre-initiation complex which assembles on the 30S ribosome in the order IF-2 and IF-3, IF-1 and N-formylmethionyl-tRNA(fMet); mRNA recruitment can occur at any time during PIC assembly.

It is found in the cytoplasm. Functionally, one of the essential components for the initiation of protein synthesis. Stabilizes the binding of IF-2 and IF-3 on the 30S subunit to which N-formylmethionyl-tRNA(fMet) subsequently binds. Helps modulate mRNA selection, yielding the 30S pre-initiation complex (PIC). Upon addition of the 50S ribosomal subunit IF-1, IF-2 and IF-3 are released leaving the mature 70S translation initiation complex. This Idiomarina loihiensis (strain ATCC BAA-735 / DSM 15497 / L2-TR) protein is Translation initiation factor IF-1.